The chain runs to 325 residues: Ubiquitin thioesterase OTU1 (325 aa).

A UBX-like region spans residues 7–86; that stretch reads RIRSKTGVEN…NVSSISSNPG (80 aa). The OTU domain occupies 123-246; it reads ATRRVTDDDN…GIHYDALSIC (124 aa). Residues 128–134 form a cys-loop region; it reads TDDDNSC. The active site involves aspartate 131. Cysteine 134 functions as the Nucleophile in the catalytic mechanism. The interval 185 to 195 is variable-loop; the sequence is IQNPKNWGGAI. A his-loop region spans residues 235-239; that stretch reads YDGIH. Isoleucine 238 is a binding site for substrate. Histidine 239 is a catalytic residue. Residues 265 to 270 form an S2 site region; sequence KDSLAK. The segment at 292–316 adopts a C2H2-type zinc-finger fold; that stretch reads LICLNCNKTLKGEKEAAIHASTTGH. The active site involves histidine 316.

The protein localises to the cytoplasm. It carries out the reaction Thiol-dependent hydrolysis of ester, thioester, amide, peptide and isopeptide bonds formed by the C-terminal Gly of ubiquitin (a 76-residue protein attached to proteins as an intracellular targeting signal).. Its function is as follows. Hydrolase that can remove conjugated ubiquitin from proteins and may therefore play an important regulatory role at the level of protein turnover by preventing degradation. The protein is Ubiquitin thioesterase OTU1 (yod1) of Dictyostelium discoideum (Social amoeba).